A 1222-amino-acid polypeptide reads, in one-letter code: MSLPERPGGISSEHRNAYRQSQSRRHRPADIEASSYYPVEGGRSSRHQPGLSANSFAETIPSPNNSFVENMPLSPTGERPAAPDQPFQRKRSLIRPERNRIDKDHPNYHYRKHAANMSTMPSATGNDPIAEDIEATTDVSGSRSQTLDGVSDTSPPRGHGSRPNSGEQEKKAPRSSAKRVSRHKSGKITKSTKKRSTPQEVIRPPSFWNVYCAIITFWCPDFMLKCFGMRSRAEQRAWREKMGLISLILLIMGCVGFITFGFTAVVCGSPPLRMRVNKVSDGYMIFHGTAYDLTRSGHPPAEGIPVPRGQRGANILWGMPGVDNRGKDGSFLFQNVNGRCKGLIEAAPNSEVPTNANGDLAWYFPCTTFNQDGKSEPNFTTPYYTGYSCHTSEKSRNAFYIDLKKSADVYFTWDDIKNSSRNLIVYSGNVLDLDLLHWFDSRQVTIPQRFEELRDTNTAANKAFRGRDVTRPFQSNGDKEIAECFEEIIKVGSIDTVTVGCIASRVVLYVFLALILSVVGSRFVLALIFQWFISRNYAAAKTSQSSDKRKRNQQIEDWSNDIYQAPARITGDIGSSVVTSDRSSKRGSTFMTTSRFSTVYGPDRGSSNKRVPTTMASSGGSGSQLLHPNSMYRQGNDSRSSFLRSDPYASNVPPSDGPGPAGFIHEAVVPQPPADWMPYGFPLAHTICLVTAYSEGAMGIRTTFDSIATTDYPNSHKVIIAICDGIIKGHGEEMATPDYVLAMMKDQTMAPEDVQPFSYVAVASGSKRHNMAKVYCGFYDYGAKSAIPVDKQQRVPMMLVVKCGTPDEATKSKPGNRGKRDSQIILMSFLQKIMFDERMTELEYEMFNGLWKVTGISPDFYECVLMVDADTKVFPDSLTHMLSAMVKDPEIMGLCGETKIANKRDSWVSAIQVFEYFISHHLAKSFESVFGGVTCLPGCFCMYRIKAPKGAQNYWVPILANPDVVEHYSENVVDTLHKKNLLLLGEDRYLSTLMLRTFPKRKQVFVPQAVCKTTVPDTFMVLLSQRRRWINSTIHNLMELVLVRDLCGTFCFSMQFIVFVELMGTLVLPAAIAFTFYVVIMSIVSKPVQVIPLILLALILGLPAVLIVITAHSWSYLVWMMIYLFSLPVWNFVLPVYAFWKFDDFSWGDTRKTAGETTKKAGLEYEGEFDSSKITMKRWAEFERERRSKANYWGSKENVVGGGNSWSMPPGHQYHDDYYSDA.

Positions 1–108 (MSLPERPGGI…NRIDKDHPNY (108 aa)) are disordered. Residues 51–68 (LSANSFAETIPSPNNSFV) are compositionally biased toward polar residues. Residue asparagine 64 is glycosylated (N-linked (GlcNAc...) asparagine). A compositionally biased stretch (basic and acidic residues) spans 94-107 (IRPERNRIDKDHPN). The N-linked (GlcNAc...) asparagine glycan is linked to asparagine 116. Positions 136 to 199 (TTDVSGSRSQ…KSTKKRSTPQ (64 aa)) are disordered. Over residues 137–154 (TDVSGSRSQTLDGVSDTS) the composition is skewed to polar residues. Over residues 176-196 (SAKRVSRHKSGKITKSTKKRS) the composition is skewed to basic residues. The next 2 helical transmembrane spans lie at 204–224 (PPSF…DFML) and 242–262 (MGLI…TFGF). 2 N-linked (GlcNAc...) asparagine glycosylation sites follow: asparagine 378 and asparagine 418. Residues 509-529 (YVFLALILSVVGSRFVLALIF) form a helical membrane-spanning segment. The tract at residues 595–662 (RFSTVYGPDR…PPSDGPGPAG (68 aa)) is disordered. Residues 608–643 (NKRVPTTMASSGGSGSQLLHPNSMYRQGNDSRSSFL) are compositionally biased toward polar residues. N-linked (GlcNAc...) asparagine glycans are attached at residues asparagine 636 and asparagine 1031. 3 helical membrane passes run 1056–1076 (FIVF…AFTF), 1090–1110 (VIPL…IVIT), and 1116–1136 (YLVW…VLPV). The segment at 1201 to 1222 (GGGNSWSMPPGHQYHDDYYSDA) is disordered. The span at 1213–1222 (QYHDDYYSDA) shows a compositional bias: basic and acidic residues.

Belongs to the chitin synthase family. Class IV subfamily.

It localises to the cell membrane. The enzyme catalyses [(1-&gt;4)-N-acetyl-beta-D-glucosaminyl](n) + UDP-N-acetyl-alpha-D-glucosamine = [(1-&gt;4)-N-acetyl-beta-D-glucosaminyl](n+1) + UDP + H(+). Polymerizes chitin, a structural polymer of the cell wall and septum, by transferring the sugar moiety of UDP-GlcNAc to the non-reducing end of the growing chitin polymer. Plays a role in cell wall integrity and is involved in tolerance to hyperosmotic conditions. Required to successfully penetrate the host plants and thus plays a key role in pathogenicity. This chain is Chitin synthase 4, found in Verticillium dahliae (strain VdLs.17 / ATCC MYA-4575 / FGSC 10137) (Verticillium wilt).